We begin with the raw amino-acid sequence, 366 residues long: Nucleoporin SEH1 (366 aa).

WD repeat units lie at residues 18 to 57 (AHRD…NWRR), 63 to 104 (CHGG…TEKD), 111 to 152 (QWIR…RIYE), 161 to 209 (RWNL…VIYE), 226 to 267 (DMPC…TAIL), and 290 to 329 (GDQR…QWVK).

This sequence belongs to the WD repeat SEC13 family. In terms of assembly, component of the nuclear pore complex (NPC). Probably part of the GATOR complex.

It is found in the nucleus. Its subcellular location is the nuclear pore complex. The protein localises to the lysosome membrane. Probable component of the nuclear pore complex (NPC) which is involved in the trafficking of macromolecules between the cytoplasm and nucleus. Functionally, as a component of the GATOR complex may function in the amino acid-sensing branch of the TORC1 signaling pathway. The chain is Nucleoporin SEH1 from Caenorhabditis briggsae.